Reading from the N-terminus, the 291-residue chain is ATP synthase gamma chain (291 aa).

It belongs to the ATPase gamma chain family. As to quaternary structure, F-type ATPases have 2 components, CF(1) - the catalytic core - and CF(0) - the membrane proton channel. CF(1) has five subunits: alpha(3), beta(3), gamma(1), delta(1), epsilon(1). CF(0) has three main subunits: a, b and c.

The protein resides in the cell inner membrane. In terms of biological role, produces ATP from ADP in the presence of a proton gradient across the membrane. The gamma chain is believed to be important in regulating ATPase activity and the flow of protons through the CF(0) complex. This Ralstonia nicotianae (strain ATCC BAA-1114 / GMI1000) (Ralstonia solanacearum) protein is ATP synthase gamma chain.